The following is a 424-amino-acid chain: Deoxyguanosinetriphosphate triphosphohydrolase-like protein (424 aa).

Positions M1–T24 are disordered. The span at D8–K18 shows a compositional bias: basic and acidic residues. The HD domain maps to R67 to S217.

This sequence belongs to the dGTPase family. Type 2 subfamily.

This Corynebacterium glutamicum (strain R) protein is Deoxyguanosinetriphosphate triphosphohydrolase-like protein.